The chain runs to 546 residues: Protein RDR1 (546 aa).

Residues 20–46 (CVPCRERKRKCNGKSPCEMCVAYGYVC) constitute a DNA-binding region (zn(2)-C6 fungal-type).

It localises to the nucleus. Its function is as follows. Transcriptional repressor of multidrug resistance genes, such as PDR5. Required for growth on non-fermentable carbon sources like lactate or glycerol. In Saccharomyces cerevisiae (strain ATCC 204508 / S288c) (Baker's yeast), this protein is Protein RDR1 (RDR1).